The sequence spans 931 residues: Up-regulator of cell proliferation (931 aa).

At serine 3 the chain carries Phosphoserine. The VLIG-type G domain maps to 689–929 (RSRLVVLSTV…NIQQLIELVR (241 aa)).

The protein belongs to the TRAFAC class dynamin-like GTPase superfamily. Very large inducible GTPase (VLIG) family. Strongly expressed in hepatitis B virus-infected liver and in HCC cells. Also highly expressed in well-differentiated gastric cancer tissues and various gastric cancer cell lines.

Its subcellular location is the cytoplasm. It is found in the nucleus. Its function is as follows. May be involved in cell cycle progression through the regulation of cyclin D1 expression. May participate in the development of hepatocellular carcinoma (HCC) by promoting hepatocellular growth and survival. May play an important role in development of gastric cancer. In Homo sapiens (Human), this protein is Up-regulator of cell proliferation (URGCP).